A 540-amino-acid polypeptide reads, in one-letter code: Pentatricopeptide repeat-containing protein At3g29290 (540 aa).

PPR repeat units lie at residues 106–140, 141–175, 177–205, 213–247, 248–282, 283–317, 318–352, 353–387, 389–423, 424–458, 459–487, and 489–523; these read NEET…GLQP, NAHA…ENVT, HTYS…LERE, DVVL…GHIG, TEIT…KISL, REDA…GMKP, NLVA…GHKP, DEYT…NLCC, NEYL…GLTV, STSS…DCKP, NTFT…KKVE, and DVSL…GLEP.

It belongs to the PPR family. P subfamily.

This Arabidopsis thaliana (Mouse-ear cress) protein is Pentatricopeptide repeat-containing protein At3g29290 (EMB2076).